The primary structure comprises 95 residues: Large ribosomal subunit protein uL23 (95 aa).

This sequence belongs to the universal ribosomal protein uL23 family. As to quaternary structure, part of the 50S ribosomal subunit. Contacts protein L29, and trigger factor when it is bound to the ribosome.

Functionally, one of the early assembly proteins it binds 23S rRNA. One of the proteins that surrounds the polypeptide exit tunnel on the outside of the ribosome. Forms the main docking site for trigger factor binding to the ribosome. In Desulfitobacterium hafniense (strain Y51), this protein is Large ribosomal subunit protein uL23.